The primary structure comprises 547 residues: Chaperonin GroEL (547 aa).

ATP is bound by residues 29–32, 86–90, Gly-413, 478–480, and Asp-494; these read TLGP, DGTTT, and DVL.

The protein belongs to the chaperonin (HSP60) family. Forms a cylinder of 14 subunits composed of two heptameric rings stacked back-to-back. Interacts with the co-chaperonin GroES.

It is found in the cytoplasm. It carries out the reaction ATP + H2O + a folded polypeptide = ADP + phosphate + an unfolded polypeptide.. Its function is as follows. Together with its co-chaperonin GroES, plays an essential role in assisting protein folding. The GroEL-GroES system forms a nano-cage that allows encapsulation of the non-native substrate proteins and provides a physical environment optimized to promote and accelerate protein folding. In Alkaliphilus metalliredigens (strain QYMF), this protein is Chaperonin GroEL.